The primary structure comprises 123 residues: MRLPAFLRPRTAKQLAGQAGEDQALIYLQQQGLQLLERNFRCKGGEIDLLMQDGKALVFVEVRMRSEKKFGGAAASIGTAKQKRLIIAAQIYLQRYSMPPPCRFDVIAFDDKEMTWLKNAIEA.

Belongs to the UPF0102 family.

The sequence is that of UPF0102 protein mma_0204 from Janthinobacterium sp. (strain Marseille) (Minibacterium massiliensis).